The sequence spans 166 residues: Co-chaperone protein HscB homolog (166 aa).

Residues 3-75 enclose the J domain; that stretch reads QYFTLFRIEP…IDRAAYLLKT (73 aa).

Belongs to the HscB family. Interacts with HscA and stimulates its ATPase activity.

Its function is as follows. Co-chaperone involved in the maturation of iron-sulfur cluster-containing proteins. Seems to help targeting proteins to be folded toward HscA. This chain is Co-chaperone protein HscB homolog, found in Neisseria meningitidis serogroup C (strain 053442).